Reading from the N-terminus, the 89-residue chain is UPF0147 protein Msed_2034 (89 aa).

It belongs to the UPF0147 family.

The protein is UPF0147 protein Msed_2034 of Metallosphaera sedula (strain ATCC 51363 / DSM 5348 / JCM 9185 / NBRC 15509 / TH2).